The chain runs to 111 residues: PCNA-associated factor (111 aa).

Position 8 is a phosphoserine (Ser8). A Glycyl lysine isopeptide (Lys-Gly) (interchain with G-Cter in ubiquitin) cross-link involves residue Lys15. Positions 23–34 match the D-box motif; the sequence is RKVLGSSTSATN. The interval 23 to 111 is disordered; it reads RKVLGSSTSA…QPDHTNDEKE (89 aa). Lys24 bears the N6-acetyllysine; alternate mark. Lys24 is covalently cross-linked (Glycyl lysine isopeptide (Lys-Gly) (interchain with G-Cter in ubiquitin); alternate). Phosphoserine occurs at positions 28, 31, and 72. Low complexity predominate over residues 28-40; sequence SSTSATNSTSVSS. Positions 62-72 match the PIP-box motif; sequence QKGIGEFFRLS. The span at 72 to 81 shows a compositional bias: basic and acidic residues; it reads SPKDSEKENQ. The short motif at 78-80 is the KEN box element; it reads KEN. An Initiation motif motif is present at residues 85-97; that stretch reads EAGSSGLGKAKRK.

In terms of assembly, interacts (when monoubiquitinated at Lys-15 and Lys-24) with PCNA. Interacts with isoform 2/p33ING1b of ING1. Interacts with BRCA1. Post-translationally, monoubiquitinated at Lys-15 and Lys-24 during normal S phase, promoting its association with PCNA. Also diubiquitinated at these 2 sites. Following DNA damage, monoubiquitin chains at Lys-15 and Lys-24 are probably extended, leading to disrupt the interaction with PCNA. Polyubiquitinated by the APC/C complex at the mitotic exit, leading to its degradation by the proteasome. Expressed predominantly in liver, pancreas and placenta. Not detected in heart or brain. Highly expressed in a number of tumors, especially esophageal tumors, in anaplastic thyroid carcinomas, adrenocortical carcinomas, and in non-small-cell lung cancer lines.

Its subcellular location is the nucleus. The protein localises to the cytoplasm. The protein resides in the perinuclear region. In terms of biological role, PCNA-binding protein that acts as a regulator of DNA repair during DNA replication. Following DNA damage, the interaction with PCNA is disrupted, facilitating the interaction between monoubiquitinated PCNA and the translesion DNA synthesis DNA polymerase eta (POLH) at stalled replisomes, facilitating the bypass of replication-fork-blocking lesions. Also acts as a regulator of centrosome number. This Homo sapiens (Human) protein is PCNA-associated factor.